Reading from the N-terminus, the 128-residue chain is Insoluble matrix shell protein 3 (128 aa).

A signal peptide spans 1-19 (MLMLLCIIATVIPFSLVEG).

As to expression, component of the acid-insoluble organic matrix of the calcified shell.

It localises to the secreted. This Ruditapes philippinarum (Japanese carpet shell) protein is Insoluble matrix shell protein 3.